The sequence spans 755 residues: Transcription factor kayak, isoforms A/B/F (755 aa).

Composition is skewed to low complexity over residues 23 to 66 and 149 to 159; these read FAQQ…LPTQ and QQHYPSESQSS. Disordered stretches follow at residues 23–75, 149–168, 316–350, and 383–440; these read FAQQ…SQSV, QQHY…PETP, LGQG…HTDS, and GSAS…KRRV. Residues 316-333 are compositionally biased toward polar residues; sequence LGQGSESEDSNASYNDTQ. 2 stretches are compositionally biased toward low complexity: residues 341–350 and 383–397; these read TDTSSAHTDS and GSAS…TSNT. The bZIP domain occupies 418 to 481; it reads EQKRAVRRER…NQLEYLLATH (64 aa). The tract at residues 420-439 is basic motif; that stretch reads KRAVRRERNKQAAARCRKRR. Positions 446 to 453 are leucine-zipper; the sequence is LTEEVEQL. Positions 510–531 are enriched in low complexity; that stretch reads AGSSGSGASSHHNHNSNDSSNG. 2 disordered regions span residues 510 to 552 and 716 to 755; these read AGSS…PLDL and DGGT…LVSL. Residues 539-549 show a composition bias toward polar residues; sequence TLNSTGRSNSP. Residue S548 is modified to Phosphoserine.

Belongs to the bZIP family. Fos subfamily. As to quaternary structure, homodimer. Heterodimer with Jra. The kay-Jra heterodimer binds more stably to the AP-1 site than either of the two proteins alone. Early expression in the embryo is mesodermal and some of this expression is localized to a region surrounding the cephalic furrow. Later in embryonic development expression is ectodermal, corresponding to muscle attachment sites. Also observed in part of the mid- and hindgut and in the anal pad.

It is found in the nucleus. Developmentally regulated transcription factor AP-1 binds and recognizes the enhancer DNA sequence: 5'-TGA[CG]TCA-3'. May play a role in the function or determination of a particular subset of cells in the developing embryo. It is able to carry out its function either independently of or in conjunction with Jra. This Drosophila melanogaster (Fruit fly) protein is Transcription factor kayak, isoforms A/B/F (kay).